Reading from the N-terminus, the 517-residue chain is MSKKKENPFSFFSYVKDESDTSSLPPPPAPIHSPSSSDNIEIPLPVFNNNNNNNNTTTTNNNTNNSNTSTSNNSKNNRKTAISFDDDDDDGDEEDEEEEDDDDDDDDDDDETNNIKSSLPQLQPQTQPQPQPQPQPQPQPPIKPTITKATPINKNVNKEINNNNNNNNNNNNTTTTTINNINNIATSANNAGTTTSKKKLIQLFDDDDTNYDDEEKLEKFDRSTPMSLPKEIPKKVSSTLSNSFDPNIIHNQSSPPPPPISIPIPLPTTDNLNNINSNNNNNNNNNNNNNNNNNNNNNNNNNNNNNNNNNNNNNNNNSNIAPPPPSSSSMVNNVNNNSSDNSSSNNNEENENLKAEITKLKTLIKGLKIQCIKYKGDKELSESKLLQSENRLEQFKLKEANETKIMEDMVAQVEENLNAMKKRAQYAENQVEQMKQEIQQLRHQNQQNSMNNPEMQELRYRLQDAKEKGRMVSQLLFQASNDADLNIKNLMRGIETLQNVSALLFSIDKISTIPNQK.

3 disordered regions span residues 16 to 148, 156 to 175, and 216 to 351; these read KDES…TITK, VNKE…NTTT, and KLEK…EENE. A compositionally biased stretch (low complexity) spans 48-75; that stretch reads NNNNNNNNTTTTNNNTNNSNTSTSNNSK. A compositionally biased stretch (acidic residues) spans 84–112; it reads FDDDDDDGDEEDEEEEDDDDDDDDDDDET. Residues 127–143 are compositionally biased toward pro residues; sequence QPQPQPQPQPQPQPPIK. Residues 236–252 show a composition bias toward polar residues; sequence VSSTLSNSFDPNIIHNQ. The segment covering 254–266 has biased composition (pro residues); the sequence is SPPPPPISIPIPL. 2 stretches are compositionally biased toward low complexity: residues 271 to 320 and 327 to 347; these read NLNN…NSNI and SSSM…SNNN. Residues 340 to 452 adopt a coiled-coil conformation; the sequence is DNSSSNNNEE…HQNQQNSMNN (113 aa).

This sequence belongs to the ENTR1 family.

This is an uncharacterized protein from Dictyostelium discoideum (Social amoeba).